We begin with the raw amino-acid sequence, 372 residues long: Carbamoyl phosphate synthase small chain (372 aa).

The tract at residues 1–184 (MKAYIYLEND…SFQKFNDAKR (184 aa)) is CPSase. Positions 45, 240, and 242 each coordinate L-glutamine. Residues 188–372 (KVAVIDYGVK…YIFKEFMNLM (185 aa)) enclose the Glutamine amidotransferase type-1 domain. Cys-268 functions as the Nucleophile in the catalytic mechanism. Residues Leu-269, Gln-272, Asn-310, and Tyr-313 each contribute to the L-glutamine site. Active-site residues include His-351 and Glu-353.

Belongs to the CarA family. As to quaternary structure, composed of two chains; the small (or glutamine) chain promotes the hydrolysis of glutamine to ammonia, which is used by the large (or ammonia) chain to synthesize carbamoyl phosphate. Tetramer of heterodimers (alpha,beta)4.

It catalyses the reaction hydrogencarbonate + L-glutamine + 2 ATP + H2O = carbamoyl phosphate + L-glutamate + 2 ADP + phosphate + 2 H(+). The catalysed reaction is L-glutamine + H2O = L-glutamate + NH4(+). The protein operates within amino-acid biosynthesis; L-arginine biosynthesis; carbamoyl phosphate from bicarbonate: step 1/1. Its pathway is pyrimidine metabolism; UMP biosynthesis via de novo pathway; (S)-dihydroorotate from bicarbonate: step 1/3. Its function is as follows. Small subunit of the glutamine-dependent carbamoyl phosphate synthetase (CPSase). CPSase catalyzes the formation of carbamoyl phosphate from the ammonia moiety of glutamine, carbonate, and phosphate donated by ATP, constituting the first step of 2 biosynthetic pathways, one leading to arginine and/or urea and the other to pyrimidine nucleotides. The small subunit (glutamine amidotransferase) binds and cleaves glutamine to supply the large subunit with the substrate ammonia. In Campylobacter jejuni subsp. jejuni serotype O:2 (strain ATCC 700819 / NCTC 11168), this protein is Carbamoyl phosphate synthase small chain.